Reading from the N-terminus, the 142-residue chain is uncharacterized protein (142 aa).

N29 and N67 each carry an N-linked (GlcNAc...) asparagine; by host glycan. Residues 88 to 108 (VFYLGYPVIFIIGVTYFSIIA) form a helical membrane-spanning segment.

It is found in the membrane. This is an uncharacterized protein from Acanthamoeba polyphaga mimivirus (APMV).